The chain runs to 255 residues: Protein N-terminal and lysine N-methyltransferase efm7 (255 aa).

Residues 1–25 (MADNDFEGFGIFEEPEGFRPSTPPP) form a disordered region. S-adenosyl-L-methionine is bound by residues W58, 84–86 (GAG), D106, W137, and S162.

The protein belongs to the class I-like SAM-binding methyltransferase superfamily. EFM7 family.

It is found in the cytoplasm. Its function is as follows. S-adenosyl-L-methionine-dependent protein methyltransferase that trimethylates the N-terminal glycine 'Gly-2' of elongation factor 1-alpha, before also catalyzing the mono- and dimethylation of 'Lys-3'. In Schizosaccharomyces pombe (strain 972 / ATCC 24843) (Fission yeast), this protein is Protein N-terminal and lysine N-methyltransferase efm7.